The chain runs to 200 residues: ATP-dependent Clp protease proteolytic subunit (200 aa).

The active-site Nucleophile is Ser-103. Residue His-128 is part of the active site.

Belongs to the peptidase S14 family. Fourteen ClpP subunits assemble into 2 heptameric rings which stack back to back to give a disk-like structure with a central cavity, resembling the structure of eukaryotic proteasomes.

The protein resides in the cytoplasm. It carries out the reaction Hydrolysis of proteins to small peptides in the presence of ATP and magnesium. alpha-casein is the usual test substrate. In the absence of ATP, only oligopeptides shorter than five residues are hydrolyzed (such as succinyl-Leu-Tyr-|-NHMec, and Leu-Tyr-Leu-|-Tyr-Trp, in which cleavage of the -Tyr-|-Leu- and -Tyr-|-Trp bonds also occurs).. Functionally, cleaves peptides in various proteins in a process that requires ATP hydrolysis. Has a chymotrypsin-like activity. Plays a major role in the degradation of misfolded proteins. The chain is ATP-dependent Clp protease proteolytic subunit from Vibrio parahaemolyticus serotype O3:K6 (strain RIMD 2210633).